The following is a 111-amino-acid chain: Nucleoid-associated protein PputW619_3586 (111 aa).

The interval 87–111 (EQSSQEKMGGMTAGMQLPPGFKMPF) is disordered.

It belongs to the YbaB/EbfC family. In terms of assembly, homodimer.

It is found in the cytoplasm. The protein resides in the nucleoid. Functionally, binds to DNA and alters its conformation. May be involved in regulation of gene expression, nucleoid organization and DNA protection. The protein is Nucleoid-associated protein PputW619_3586 of Pseudomonas putida (strain W619).